A 151-amino-acid polypeptide reads, in one-letter code: Large ribosomal subunit protein uL13 (151 aa).

Belongs to the universal ribosomal protein uL13 family. As to quaternary structure, part of the 50S ribosomal subunit.

Functionally, this protein is one of the early assembly proteins of the 50S ribosomal subunit, although it is not seen to bind rRNA by itself. It is important during the early stages of 50S assembly. In Petrotoga mobilis (strain DSM 10674 / SJ95), this protein is Large ribosomal subunit protein uL13.